A 132-amino-acid polypeptide reads, in one-letter code: Salivary cystatin-L2 (132 aa).

A signal peptide spans 1 to 18; that stretch reads MTSSLALVLVFGGAAVCA. The region spanning 28 to 117 is the Cystatin domain; sequence ERSNQDDPEY…RTCTTVIYRN (90 aa). The required for interaction with mouse ANXA2 stretch occupies residues 87 to 131; it reads TCELTSTYNKDTCQANANAAQRTCTTVIYRNLQGEKSISSFECAA. 2 disulfide bridges follow: Cys88-Cys99 and Cys110-Cys129.

It belongs to the cystatin family. As to quaternary structure, monomer. Interacts (via loop 2) with mouse ANXA2; the interaction results in reduced activation of mouse NLRC4 inflammasome formation upon Anaplasma phagocytophilum infection. In terms of tissue distribution, detected in salivary gland and midgut.

It localises to the secreted. Functionally, contributes to the suppression of the host's immune response to tick salivary proteins and is important for successful feeding on hosts. Inhibitor of cysteine proteinases. Inhibits host immune responses, probably via its inhibition of host cathepsins. Inhibits host papain (in vitro). Inhibits host cathepsin L (CTSL) (in vitro). Inhibits host cathepsin L2 (CTSV) (in vitro). Attenuates IFN-beta (IFNB1)-triggered JAK/STAT signaling pathway in mouse dendritic cells. Suppresses induction of interferon-stimulated gene IRF7 and production of CXCL10 in lipopolysaccharide (LPS)-activated dendritic cells. Its function is as follows. (Microbial infection) Down-regulates TLR2-mediated host responses to infection by Borrelia burgdorferi and the production of chemokines CCL3 and CXCL10 by host dendritic cells. Enhances infection by the tick-transmitted pathogen B.burgdorferi (in vitro). (Microbial infection) Inhibits host inflammatory responses to Anaplasma phagocytophilum infection. Interacts with mouse ANXA2 and suppresses oligomerization of NLRC4, a key component of host inflammasomes that sense A.phagocytophilum infection. Indirectly targets caspase-1 (CASP1) activation and subsequent IL-1beta (IL1B) and IL18 release by inhibiting reactive oxygen species (ROS) production from NADPH oxidase complex in A.phagocytophilum-infected mouse macrophages. In terms of biological role, (Microbial infection) Promotes replication of tick-borne encephalitis virus in mouse dendritic cells and reduces anti-viral effect of host IFN-beta (IFNB1). This chain is Salivary cystatin-L2, found in Ixodes scapularis (Black-legged tick).